The following is a 318-amino-acid chain: Dual specificity protein phosphatase 2 (318 aa).

The 122-residue stretch at 27-148 (EAERTLLLDC…FQTYCPDLCS (122 aa)) folds into the Rhodanese domain. The Tyrosine-protein phosphatase domain occupies 176–317 (GPVEILPYLY…LLQLETQVLC (142 aa)). Cys-261 (phosphocysteine intermediate) is an active-site residue.

It belongs to the protein-tyrosine phosphatase family. Non-receptor class dual specificity subfamily. As to quaternary structure, interacts with MAPK14; this interaction does not lead to catalytic activation of DUSP2 and dephosphrylation of MAPK14. In hematopoietic tissues such as spleen and thymus.

It localises to the nucleus. It carries out the reaction O-phospho-L-tyrosyl-[protein] + H2O = L-tyrosyl-[protein] + phosphate. The enzyme catalyses O-phospho-L-threonyl-[protein] + H2O = L-threonyl-[protein] + phosphate. Functionally, dephosphorylates both phosphorylated Thr and Tyr residues in MAPK1, and dephosphorylation of phosphotyrosine is slightly faster than that of phosphothreonine. Can dephosphorylate MAPK1. This Mus musculus (Mouse) protein is Dual specificity protein phosphatase 2.